The primary structure comprises 1040 residues: MQVLPPSSTGGPSRLFIMRPVATTLLMVAILLAGIIGYRALPVSALPEVDYPTIQVVTLYPGASPDVMTSAVTAPLERQFGQMSGLKQMSSQSSGGASVITLQFQLTLPLDVAEQEVQAAINAATNLLPSDLPNPPVYSKVNPADPPIMTLAVTSTAMPMTQVEDMVETRVAQKISQISGVGLVTLSGGQRPAVRVKLNAQAIAALGLTSETVRTAITGANVNSAKGSLDGPSRAVTLSANDQMQSAEEYRQLIIAYQNGAPIRLGDVATVEQGAENSWLGAWANKEQAIVMNVQRQPGANIISTADSIRQMLPQLTESLPKSVKVTVLSDRTTNIRASVNDTQFELMMAIALVVMIIYLFLRNIPATIIPGVAVPLSLIGTFAVMVFLDFSINNLTLMALTIATGFVVDDAIVVIENISRYIEKGEKPLAAALKGAGEIGFTIISLTFSLIAVLIPLLFMGDIVGRLFREFAITLAVAILISAVVSLTLTPMMCARMLSQESLRKQNRFSRASEKMFERIIAAYGRGLAKVLNHPWLTLSVALSTLLLSVLLWVFIPKGFFPVQDNGIIQGTLQAPQSSSFTNMAQRQRQVADVILQDPAVQSLTSFVGVDGTNPSLNSARLQINLKPLDERDDRVQKVIARLQTAVDKVPGVDLFLQPTQDLTIDTQVSRTQYQFTLQATSLDALSTWVPQLMEKLQQLPQLSDVSSDWQDKGLVAYVNVDRDSASRLGINMADVDNALYNAFGQRLISTIYTQANQYRVVLEHNTENTPGLAALDTIRLTSSDGGVVPLSSIAKIEQRFAPLSINHLDQFPVTTISFNVPDNYSLGDAVQAIMDTEKTLNLPVDITTQFQGSTLAFQSALGSTVWLIVAAVVAMYIVLGILYESFIHPITILSTLPTAGVGALLALLIAGSELDVIAIIGIILLIGIVKKNAIMMIDFALAAEREQGMSPRDAIYQACLLRFRPILMTTLAALLGALPLMLSTGVGAELRRPLGIGMVGGLIVSQVLTLFTTPVIYLLFDRLALWTKSRFARHEEEA.

A run of 12 helical transmembrane segments spans residues 16 to 36 (FIMR…AGII), 347 to 367 (LMMA…NIPA), 369 to 389 (IIPG…MVFL), 396 to 416 (LTLM…IVVI), 440 to 460 (IGFT…PLLF), 472 to 492 (FAIT…TLTP), 537 to 557 (WLTL…WVFI), 863 to 883 (LGST…VLGI), 888 to 908 (FIHP…ALLA), 911 to 931 (IAGS…IGIV), 968 to 988 (ILMT…STGV), and 998 to 1018 (IGMV…TPVI).

It belongs to the resistance-nodulation-cell division (RND) (TC 2.A.6) family. MdtB subfamily. Part of a tripartite efflux system composed of MdtA, MdtB and MdtC. MdtB forms a heteromultimer with MdtC.

It localises to the cell inner membrane. In terms of biological role, the MdtABC tripartite complex confers resistance against novobiocin and deoxycholate. In Escherichia coli O17:K52:H18 (strain UMN026 / ExPEC), this protein is Multidrug resistance protein MdtB.